The following is a 140-amino-acid chain: Large ribosomal subunit protein bL17 (140 aa).

Belongs to the bacterial ribosomal protein bL17 family. In terms of assembly, part of the 50S ribosomal subunit. Contacts protein L32.

The polypeptide is Large ribosomal subunit protein bL17 (Rhizobium leguminosarum bv. trifolii (strain WSM2304)).